The chain runs to 252 residues: 2,5-diamino-6-ribosylamino-4(3H)-pyrimidinone 5'-phosphate reductase (252 aa).

NADP(+) is bound by residues T80, D84, V166, and G189–I193.

It belongs to the HTP reductase family. In terms of assembly, homodimer.

The enzyme catalyses 2,5-diamino-6-(1-D-ribitylamino)pyrimidin-4(3H)-one 5'-phosphate + NADP(+) = 2,5-diamino-6-(1-D-ribosylamino)pyrimidin-4(3H)-one 5'-phosphate + NADPH + H(+). It carries out the reaction 2,5-diamino-6-(1-D-ribitylamino)pyrimidin-4(3H)-one 5'-phosphate + NAD(+) = 2,5-diamino-6-(1-D-ribosylamino)pyrimidin-4(3H)-one 5'-phosphate + NADH + H(+). It participates in cofactor biosynthesis; riboflavin biosynthesis. Catalyzes an early step in riboflavin biosynthesis, the NADPH-dependent reduction of the ribose side chain of 2,5-diamino-6-ribosylamino-4(3H)-pyrimidinone 5'-phosphate, yielding 2,5-diamino-6-ribitylamino-4(3H)-pyrimidinone 5'-phosphate. The polypeptide is 2,5-diamino-6-ribosylamino-4(3H)-pyrimidinone 5'-phosphate reductase (RIB7) (Kluyveromyces lactis (strain ATCC 8585 / CBS 2359 / DSM 70799 / NBRC 1267 / NRRL Y-1140 / WM37) (Yeast)).